The sequence spans 630 residues: NUAK family SNF1-like kinase 2 (630 aa).

Met-1 carries the post-translational modification N-acetylmethionine. The Protein kinase domain occupies 57 to 307; that stretch reads YEFLETLGKG…LEDVASHWWV (251 aa). ATP is bound by residues 63–71 and Lys-85; that span reads LGKGTYGKV. Residue Asp-179 is the Proton acceptor of the active site. The residue at position 212 (Thr-212) is a Phosphothreonine. Disordered regions lie at residues 361–504 and 521–566; these read HVPG…RLHR and GTAP…LDLP. Residues 464 to 476 are compositionally biased toward low complexity; the sequence is SGYYSSPEPSESG. 4 positions are modified to phosphoserine: Ser-529, Ser-550, Ser-553, and Ser-579.

The protein belongs to the protein kinase superfamily. CAMK Ser/Thr protein kinase family. SNF1 subfamily. Mg(2+) is required as a cofactor. In terms of processing, phosphorylated at Thr-212 by STK11/LKB1 in complex with STE20-related adapter-alpha (STRADA) pseudo kinase and CAB39. Autophosphorylation is also possible at Thr-212. Expressed in liver, skin, testis, uterus, ovary, adrenal gland and brain (at protein level). Expressed in kidney, heart, skin, spleen, lung, uterus, liver and the exocrine and endocrine compartments of the human pancreas. A kinase-inactive isoform also appears to be expressed in the skin, spleen, lung, uterus, liver and testis.

It catalyses the reaction L-seryl-[protein] + ATP = O-phospho-L-seryl-[protein] + ADP + H(+). The catalysed reaction is L-threonyl-[protein] + ATP = O-phospho-L-threonyl-[protein] + ADP + H(+). Its activity is regulated as follows. Activated by phosphorylation on Thr-212 by STK11 in complex with STE20-related adapter-alpha (STRAD alpha) pseudo kinase and CAB39. Stress-activated kinase involved in tolerance to glucose starvation. Induces cell-cell detachment by increasing F-actin conversion to G-actin. Expression is induced by CD95 or TNF-alpha, via NF-kappa-B. Protects cells from CD95-mediated apoptosis and is required for the increased motility and invasiveness of CD95-activated tumor cells. Phosphorylates LATS1 and LATS2. Plays a key role in neural tube closure during embryonic development through LATS2 phosphorylation and regulation of the nuclear localization of YAP1 a critical downstream regulatory target in the Hippo signaling pathway. This chain is NUAK family SNF1-like kinase 2, found in Rattus norvegicus (Rat).